The primary structure comprises 280 residues: 3-methyl-2-oxobutanoate hydroxymethyltransferase (280 aa).

Mg(2+)-binding residues include D60 and D99. Residues 60–61 (DS), D99, and K129 contribute to the 3-methyl-2-oxobutanoate site. A Mg(2+)-binding site is contributed by E131. E198 acts as the Proton acceptor in catalysis.

This sequence belongs to the PanB family. As to quaternary structure, homodecamer; pentamer of dimers. The cofactor is Mg(2+).

It is found in the cytoplasm. It catalyses the reaction 3-methyl-2-oxobutanoate + (6R)-5,10-methylene-5,6,7,8-tetrahydrofolate + H2O = 2-dehydropantoate + (6S)-5,6,7,8-tetrahydrofolate. It functions in the pathway cofactor biosynthesis; (R)-pantothenate biosynthesis; (R)-pantoate from 3-methyl-2-oxobutanoate: step 1/2. Functionally, catalyzes the reversible reaction in which hydroxymethyl group from 5,10-methylenetetrahydrofolate is transferred onto alpha-ketoisovalerate to form ketopantoate. This Thermobifida fusca (strain YX) protein is 3-methyl-2-oxobutanoate hydroxymethyltransferase.